The primary structure comprises 875 residues: Probable dipeptidyl-aminopeptidase B (875 aa).

The segment at 1-90 (MSEPKPIQDT…ASSETTPPRK (90 aa)) is disordered. Residues 1–98 (MSEPKPIQDT…RKGVDRKLKK (98 aa)) are Cytoplasmic-facing. The span at 19-28 (SSISSASTTS) shows a compositional bias: low complexity. Over residues 33-46 (RLAEESEKNHDASS) the composition is skewed to basic and acidic residues. Residues 99–119 (VLLIVGGFFVAAWIVSLVVFL) form a helical; Signal-anchor for type II membrane protein membrane-spanning segment. Topologically, residues 120 to 875 (TNKSYKHGSQ…VNDAKPKIES (756 aa)) are vacuolar. N-linked (GlcNAc...) asparagine glycosylation is found at Asn-354 and Asn-567. A disordered region spans residues 689–715 (VDFQSSDGGRRTTRSPRRATGRPSATS). Over residues 699-708 (RTTRSPRRAT) the composition is skewed to basic residues. Residue Ser-726 is the Charge relay system of the active site. The N-linked (GlcNAc...) asparagine glycan is linked to Asn-785. Residues Asp-803 and His-836 each act as charge relay system in the active site.

Belongs to the peptidase S9B family.

Its subcellular location is the vacuole membrane. It catalyses the reaction Release of an N-terminal dipeptide, Xaa-Yaa-|-Zaa-, from a polypeptide, preferentially when Yaa is Pro, provided Zaa is neither Pro nor hydroxyproline.. Functionally, type IV dipeptidyl-peptidase which removes N-terminal dipeptides sequentially from polypeptides having unsubstituted N-termini provided that the penultimate residue is proline. This is Probable dipeptidyl-aminopeptidase B (DAPB) from Verticillium alfalfae (strain VaMs.102 / ATCC MYA-4576 / FGSC 10136) (Verticillium wilt of alfalfa).